The primary structure comprises 88 residues: uncharacterized protein (88 aa).

The first 23 residues, 1-23, serve as a signal peptide directing secretion; that stretch reads MAVSGLRLTIVWGLLVLILTCQA. The segment covering 25–40 has biased composition (basic and acidic residues); that stretch reads DKPEGKPDEQPHDSGK. Positions 25–45 are disordered; that stretch reads DKPEGKPDEQPHDSGKNSEPA.

The protein resides in the secreted. This is an uncharacterized protein from Bos taurus (Bovine).